The sequence spans 86 residues: Large ribosomal subunit protein bL27 (86 aa).

The segment at 1–26 (MAHKKAAGSTRNGRDSESKRLGVKRY) is disordered.

Belongs to the bacterial ribosomal protein bL27 family.

The protein is Large ribosomal subunit protein bL27 of Marinobacter nauticus (strain ATCC 700491 / DSM 11845 / VT8) (Marinobacter aquaeolei).